The sequence spans 470 residues: Cysteine--tRNA ligase (470 aa).

Position 28 (Cys-28) interacts with Zn(2+). A 'HIGH' region motif is present at residues 30-40 (PTVYNYIHIGN). Zn(2+) contacts are provided by Cys-212, His-237, and Glu-241. The short motif at 271 to 275 (KMSKS) is the 'KMSKS' region element. Lys-274 is a binding site for ATP.

The protein belongs to the class-I aminoacyl-tRNA synthetase family. Monomer. Zn(2+) serves as cofactor.

It localises to the cytoplasm. The catalysed reaction is tRNA(Cys) + L-cysteine + ATP = L-cysteinyl-tRNA(Cys) + AMP + diphosphate. The chain is Cysteine--tRNA ligase from Pediococcus pentosaceus (strain ATCC 25745 / CCUG 21536 / LMG 10740 / 183-1w).